Here is a 207-residue protein sequence, read N- to C-terminus: Cytidylate kinase (207 aa).

An ATP-binding site is contributed by G7 to S15.

This sequence belongs to the cytidylate kinase family. Type 1 subfamily.

The protein localises to the cytoplasm. It carries out the reaction CMP + ATP = CDP + ADP. The catalysed reaction is dCMP + ATP = dCDP + ADP. In Deinococcus deserti (strain DSM 17065 / CIP 109153 / LMG 22923 / VCD115), this protein is Cytidylate kinase.